Here is a 95-residue protein sequence, read N- to C-terminus: Scorpine-like peptide Smp76 (95 aa).

Positions 1–19 are cleaved as a signal peptide; it reads MNCKLTALLFLGLIVIASC. A BetaSPN-type CS-alpha/beta domain is found at 55–95; sequence EFQCVANVDTLGNCKKHCAKTTGEKGYCHGTKCKCGIELSY. 3 disulfides stabilise this stretch: Cys58-Cys82, Cys68-Cys87, and Cys72-Cys89.

Disulfide bonds are critical for antiviral function, and their disruption inhibit viral activity. Expressed by the venom gland.

It localises to the secreted. Its function is as follows. Antibacterial peptide. Dose-dependently inhibits Dengue virus (DENV), Zika virus (ZIKV) and Hepatitis C virus (HCV) infections. Two mechanisms of action have been described by two different groups: one involving activity on extracellular particles, and the other regulating the immune system. On Dengue virus (DENV), Zika virus (ZIKV), suppress the established viral infection, similar to the effect of interferon (IFN)-beta. Mechanistically, upregulates the expression of IFN-beta by activating interferon regulatory transcription factor 3 (IRF3) phosphorylation. On HCV and DENV, acts by inactivating extra-cellular infectious particles without affecting viral replication. Shows very weak inhibition on measles virus. Is neither toxic nor hemolytic in vitro at high concentrations. This Scorpio palmatus (Israeli golden scorpion) protein is Scorpine-like peptide Smp76.